The sequence spans 2170 residues: Supervillin (2170 aa).

Residues 1–167 are interaction with MYLK; the sequence is MKRKERIARR…NSRHSRTESG (167 aa). 5 disordered regions span residues 37-94, 107-327, 413-444, 511-546, and 567-643; these read EDTP…HSLE, RRRQ…QSES, PEPLERSPKSLLTSEDDRLVRGHKDPSGNKDL, DYTGPPQLQVPRHKDEAPSQELELQSSRAEGPGAEA, and RASK…EDEE. Phosphoserine is present on S50. Polar residues-rich tracts occupy residues 63–73 and 81–90; these read PGSSLEKQTPS and GIHSSGSMDT. Over residues 134–166 the composition is skewed to basic and acidic residues; the sequence is SRKDPDVTERRGKSDKQEEQSKDANSRHSRTES. Residues 167–195 show a composition bias toward polar residues; that stretch reads GPRTSLVASQDCTPLGSNMSDQEQLLNVE. S220, S227, and S241 each carry phosphoserine. Residues 230-241 are compositionally biased toward polar residues; sequence QIPSSPLQQPAS. Composition is skewed to basic and acidic residues over residues 261–272 and 286–297; these read PTHEWFLQRDSE and KVREKLVKEESA. The span at 298-313 shows a compositional bias: polar residues; it reads RSSPELTSESLTQRRQ. Residues S299 and S300 each carry the phosphoserine modification. The span at 427-444 shows a compositional bias: basic and acidic residues; it reads EDDRLVRGHKDPSGNKDL. Basic and acidic residues-rich tracts occupy residues 570 to 582 and 606 to 615; these read KKPELQSRVERSA and ESRKTSERFR. Phosphoserine is present on residues S632, S666, S728, and S761. Residues 743-771 form a disordered region; the sequence is ASAHQKALARDQANEGRESAEPGEPDSST. Residues 750 to 762 show a composition bias toward basic and acidic residues; sequence LARDQANEGRESA. The residue at position 809 (Y809) is a Phosphotyrosine. T811 is modified (phosphothreonine). 3 positions are modified to phosphoserine: S857, S877, and S881. The interval 887 to 909 is disordered; the sequence is AWRPLVEHSGSKGMPGESGKTES. Phosphoserine occurs at positions 960, 1011, 1031, and 1077. Residues 1117 to 1137 are disordered; that stretch reads HTQEVEQSLKKKRVTESRESQ. The segment covering 1119 to 1137 has biased composition (basic and acidic residues); sequence QEVEQSLKKKRVTESRESQ. An Omega-N-methylarginine modification is found at R1159. A phosphoserine mark is found at S1181 and S1184. T1186 carries the post-translational modification Phosphothreonine. Phosphoserine is present on residues S1190, S1278, and S1361. Residues 1375–1643 form an interaction with NEB region; it reads SNINLRSVNL…KFLDWTELKR (269 aa). Gelsolin-like repeat units follow at residues 1397 to 1496, 1516 to 1638, 1708 to 1818, 1837 to 1938, and 1971 to 2078; these read KKLM…LGGQ, IETN…FLDW, VSVD…FQGG, WRLY…LGRR, and ATEF…FPSW. Positions 2107–2170 constitute an HP domain; that stretch reads KLCKTIYPLA…VNLKKSKGLF (64 aa).

Belongs to the villin/gelsolin family. As to quaternary structure, associates with F-actin. Interacts with NEB. Interacts with MYH9. Interacts with MYLK. Interacts with TASOR. Interacts with TRIP6. Interacts with DYNLT1. Interacts with KIF14; at midbody during cytokinesis. In terms of tissue distribution, expressed in the heart, tongue and granular cells within the cerebellum.

It is found in the cell membrane. It localises to the cytoplasm. The protein resides in the cytoskeleton. Its subcellular location is the cell projection. The protein localises to the invadopodium. It is found in the podosome. It localises to the midbody. The protein resides in the cleavage furrow. Its function is as follows. Forms a high-affinity link between the actin cytoskeleton and the membrane. Is among the first costameric proteins to assemble during myogenesis and it contributes to myogenic membrane structure and differentiation. Appears to be involved in myosin II assembly. May modulate myosin II regulation through MLCK during cell spreading, an initial step in cell migration. May play a role in invadopodial function. In terms of biological role, may be involved in modulation of focal adhesions. Supervillin-mediated down-regulation of focal adhesions involves binding to TRIP6. Plays a role in cytokinesis through KIF14 interaction. The sequence is that of Supervillin (Svil) from Mus musculus (Mouse).